A 445-amino-acid chain; its full sequence is Phosphoglucosamine mutase 1 (445 aa).

The Phosphoserine intermediate role is filled by Ser-102. Mg(2+)-binding residues include Ser-102, Asp-241, Asp-243, and Asp-245. Ser-102 is subject to Phosphoserine.

It belongs to the phosphohexose mutase family. Requires Mg(2+) as cofactor. Post-translationally, activated by phosphorylation.

It carries out the reaction alpha-D-glucosamine 1-phosphate = D-glucosamine 6-phosphate. Catalyzes the conversion of glucosamine-6-phosphate to glucosamine-1-phosphate. The sequence is that of Phosphoglucosamine mutase 1 from Shewanella sp. (strain MR-4).